The following is a 272-amino-acid chain: Probable ribosomal RNA small subunit methyltransferase A (272 aa).

Positions 23, 25, 50, 71, 95, and 110 each coordinate S-adenosyl-L-methionine.

It belongs to the class I-like SAM-binding methyltransferase superfamily. rRNA adenine N(6)-methyltransferase family. RsmA subfamily.

Its subcellular location is the cytoplasm. Functionally, specifically dimethylates two adjacent adenosines in the loop of a conserved hairpin near the 3'-end of 16S rRNA in the 30S particle. May play a critical role in biogenesis of 30S subunits. This chain is Probable ribosomal RNA small subunit methyltransferase A, found in Thermococcus onnurineus (strain NA1).